A 299-amino-acid polypeptide reads, in one-letter code: GTPase Era (299 aa).

The Era-type G domain maps to 5–172 (KSGFVSIIGR…IDVLKTYLPE (168 aa)). The interval 13 to 20 (GRPNVGKS) is G1. Residue 13–20 (GRPNVGKS) coordinates GTP. The G2 stretch occupies residues 39–43 (QTTRN). Residues 60-63 (DTPG) form a G3 region. GTP is bound by residues 60–64 (DTPGI) and 122–125 (NKID). Residues 122 to 125 (NKID) are G4. The tract at residues 151-153 (ISA) is G5. The region spanning 203-280 (TSEEIPHAIG…YLELWVKVQR (78 aa)) is the KH type-2 domain.

This sequence belongs to the TRAFAC class TrmE-Era-EngA-EngB-Septin-like GTPase superfamily. Era GTPase family. In terms of assembly, monomer.

It is found in the cytoplasm. It localises to the cell membrane. Functionally, an essential GTPase that binds both GDP and GTP, with rapid nucleotide exchange. Plays a role in 16S rRNA processing and 30S ribosomal subunit biogenesis and possibly also in cell cycle regulation and energy metabolism. The polypeptide is GTPase Era (Staphylococcus aureus (strain NCTC 8325 / PS 47)).